A 1333-amino-acid chain; its full sequence is Partitioning defective 3 homolog (1333 aa).

At S25 the chain carries Phosphoserine. T91 bears the Phosphothreonine mark. Residues 143–262 (SSDPALTGLS…VGHADTGLEN (120 aa)) form a disordered region. Polar residues-rich tracts occupy residues 150–163 (GLST…FSSE) and 171–187 (TRWS…TAGS). Phosphoserine is present on residues S156 and S174. Positions 190–203 (TCDRKKDENYRSLP) are enriched in basic and acidic residues. Residues 207-224 (SSWSNQFQRDNARSSLSA) show a composition bias toward polar residues. Residues 271–359 (MVKLVQVPND…ARVIWFHVVP (89 aa)) form the PDZ 1 domain. 2 disordered regions span residues 369–388 (LSQR…DSHC) and 397–441 (NAPQ…APPS). S383 bears the Phosphoserine mark. 2 consecutive PDZ domains span residues 461–546 (NIQL…LVFR) and 590–677 (EVPL…GMIQ). Position 489 is a phosphotyrosine (Y489). Phosphoserine occurs at positions 692, 695, 715, 728, 806, and 824. 2 interaction with PRKCI and PRKCZ regions span residues 712 to 932 (RRIS…YDKP) and 712 to 936 (RRIS…MVDD). K831 is subject to N6-acetyllysine. S834 carries the post-translational modification Phosphoserine. An N6-acetyllysine modification is found at K848. S849 and S869 each carry phosphoserine. Disordered regions lie at residues 861–884 (TVDD…KKSS), 928–1011 (SYDK…AKKG), 1024–1071 (KHRK…ERQA), 1110–1267 (PQSP…LGGH), and 1283–1333 (QEQR…PFYS). The residue at position 881 (K881) is an N6-acetyllysine. Positions 931–1333 (KPMVDDDDEG…TPEKGRPFYS (403 aa)) are interaction with FRMD4A. The span at 935-949 (DDDDEGMETLEEDTE) shows a compositional bias: acidic residues. A Phosphoserine; by AURKA modification is found at S958. S967 and S969 each carry phosphoserine. Basic and acidic residues-rich tracts occupy residues 977-1005 (DPEK…EKDK) and 1026-1039 (RKDD…RIKI). S1042 is modified (phosphoserine). Residues 1046–1071 (EEDRVRMKEEQERIQAKTREFRERQA) are compositionally biased toward basic and acidic residues. Residues 1046–1078 (EEDRVRMKEEQERIQAKTREFRERQARERDYAE) are a coiled coil. Polar residues predominate over residues 1134–1143 (PGDSNRSTPS). Positions 1144–1171 (NHDRIQRLRQEFQQAKQDEDVEDRRRTY) are enriched in basic and acidic residues. 3 coiled-coil regions span residues 1145–1168 (HDRI…EDRR), 1195–1218 (VQVQ…YSSL), and 1274–1295 (MLET…LKKQ). The segment covering 1176–1199 (SWSSSRPASQSGRHSVSVEVQVQR) has biased composition (low complexity). Over residues 1215–1236 (YSSLPRQSRKNASSISQDSWEQ) the composition is skewed to polar residues. Residues 1283–1292 (QEQRRKEQQL) show a composition bias toward basic and acidic residues. A compositionally biased stretch (polar residues) spans 1314–1323 (SQVARLNRLQ). Positions 1324-1333 (TPEKGRPFYS) are enriched in basic and acidic residues. The residue at position 1327 (K1327) is an N6-acetyllysine.

This sequence belongs to the PAR3 family. Interacts with PRCKI and CDH5. Interacts (via PDZ 3 domain) with PTEN (via C-terminus). Component of a complex whose core is composed of ARHGAP17, AMOT, PALS1, PATJ and PARD3/PAR3. Interacts with LIMK2, AURKA and AURKB. Component of the Par polarity complex, composed of at least phosphorylated PRKCZ, PARD3 and TIAM1. Interacts with ECT2 and FBF1. Interacts (via PDZ 1 domain) with F11R/JAM1, PARD6A and PARD6B. Part of a complex with PARD6A or PARD6B, PRKCI or PRKCZ and CDC42 or RAC1. Directly interacts with TIAM1 and TIAM2. Interacts with SIRT2. Interacts (via coiled-coil domain) with FRMD4A. Found in a complex with PARD3, CYTH1 and FRMD4A. Interacts with SAPCD2. Interacts with PRKCA. In terms of assembly, interacts with PRKCZ. In terms of processing, acetylated. Deacetylated by SIRT2, thereby inhibiting Schwann cell peripheral myelination. Post-translationally, phosphorylation at Ser-824 by PRKCZ and PRKCI occurs at the most apical tip of epithelial cell-cell contacts during the initial phase of tight junction formation and may promote dissociation of the complex with PARD6. EGF-induced Tyr-1123 phosphorylation mediates dissociation from LIMK2. Phosphorylation by AURKA at Ser-958 is required for the normal establishment of neuronal polarity. Isoform 4 and isoform 5 are phosphorylated during oocyte maturation. All isoforms are expressed in heart, while expression in brain is mainly limited to isoform 1, and to isoform 3 to a weaker level.

Its subcellular location is the cytoplasm. The protein localises to the endomembrane system. The protein resides in the cell junction. It is found in the tight junction. It localises to the adherens junction. Its subcellular location is the cell cortex. The protein localises to the cytoskeleton. The protein resides in the cell membrane. In terms of biological role, adapter protein involved in asymmetrical cell division and cell polarization processes. Seems to play a central role in the formation of epithelial tight junctions. Targets the phosphatase PTEN to cell junctions. Association with PARD6B may prevent the interaction of PARD3 with F11R/JAM1, thereby preventing tight junction assembly. The PARD6-PARD3 complex links GTP-bound Rho small GTPases to atypical protein kinase C proteins. Required for establishment of neuronal polarity and normal axon formation in cultured hippocampal neurons. Involved in Schwann cell peripheral myelination. The sequence is that of Partitioning defective 3 homolog (Pard3) from Mus musculus (Mouse).